A 458-amino-acid chain; its full sequence is tRNA-2-methylthio-N(6)-dimethylallyladenosine synthase (458 aa).

Positions lysine 15–glutamine 134 constitute an MTTase N-terminal domain. 6 residues coordinate [4Fe-4S] cluster: cysteine 24, cysteine 60, cysteine 97, cysteine 175, cysteine 179, and cysteine 182. The Radical SAM core domain maps to arginine 161–leucine 395. One can recognise a TRAM domain in the interval arginine 396–asparagine 457.

Belongs to the methylthiotransferase family. MiaB subfamily. As to quaternary structure, monomer. Requires [4Fe-4S] cluster as cofactor.

The protein localises to the cytoplasm. The catalysed reaction is N(6)-dimethylallyladenosine(37) in tRNA + (sulfur carrier)-SH + AH2 + 2 S-adenosyl-L-methionine = 2-methylsulfanyl-N(6)-dimethylallyladenosine(37) in tRNA + (sulfur carrier)-H + 5'-deoxyadenosine + L-methionine + A + S-adenosyl-L-homocysteine + 2 H(+). Its function is as follows. Catalyzes the methylthiolation of N6-(dimethylallyl)adenosine (i(6)A), leading to the formation of 2-methylthio-N6-(dimethylallyl)adenosine (ms(2)i(6)A) at position 37 in tRNAs that read codons beginning with uridine. The polypeptide is tRNA-2-methylthio-N(6)-dimethylallyladenosine synthase (Bartonella tribocorum (strain CIP 105476 / IBS 506)).